A 190-amino-acid polypeptide reads, in one-letter code: Cancer-related nucleoside-triphosphatase homolog (190 aa).

ATP contacts are provided by residues Gly-9–Thr-16 and Val-109–Gly-116. Lys-165 is modified (N6-acetyllysine).

Belongs to the THEP1 NTPase family. In terms of assembly, monomer.

It carries out the reaction a ribonucleoside 5'-triphosphate + H2O = a ribonucleoside 5'-diphosphate + phosphate + H(+). The catalysed reaction is 5-methyl-UTP + H2O = 5-methyl-UDP + phosphate + H(+). The enzyme catalyses CTP + H2O = CDP + phosphate + H(+). It catalyses the reaction ATP + H2O = ADP + phosphate + H(+). It carries out the reaction GTP + H2O = GDP + phosphate + H(+). Its function is as follows. Has nucleotide phosphatase activity towards ATP, GTP, CTP, TTP and UTP. Hydrolyzes nucleoside diphosphates with lower efficiency. This chain is Cancer-related nucleoside-triphosphatase homolog, found in Mus musculus (Mouse).